The sequence spans 360 residues: Leukotriene B4 receptor 2 (360 aa).

Residues 1–24 (MSVCYRPPGNETLLSWKGSRATGT) are Extracellular-facing. Residue N10 is glycosylated (N-linked (GlcNAc...) asparagine). The helical transmembrane segment at 25-45 (AFLLLAALLGLPGNGFVVWSL) threads the bilayer. Topologically, residues 46–60 (AGWRPTAGRPLAATL) are cytoplasmic. The chain crosses the membrane as a helical span at residues 61 to 81 (VLHLALADGAVLLLTPLFVAF). The Extracellular portion of the chain corresponds to 82–96 (LSQEAWPLGQVGCKA). A helical membrane pass occupies residues 97–117 (VYYVCALSMYASVLLTGLLSL). Residues 118–140 (QRCLAVTRPFLAPRLRSPALARR) are Cytoplasmic-facing. A helical transmembrane segment spans residues 141-161 (LLLGVWLAALVLAVPAAVYRH). Residues 162-185 (LWGGRVCQLCHPSPVHAAAHLSLE) are Extracellular-facing. A helical membrane pass occupies residues 186-206 (TLTAFVLPFGTVLGCYGVTLA). The Cytoplasmic segment spans residues 207–224 (RLRGARWGSGRQGTRVGR). Residues 225-245 (LVSAIVLAFGLLWAPYHAVNL) form a helical membrane-spanning segment. Residues 246–275 (LQAVAALAPPEGPLARLGGAGQAARAGTTA) lie on the Extracellular side of the membrane. Residues 276 to 296 (LAFFSSSVNPVLYVFTAGDLL) traverse the membrane as a helical segment. Topologically, residues 297–360 (PRAGPRFLTR…GKTEKDSQEW (64 aa)) are cytoplasmic. The interval 311 to 360 (SGEARGGSRSREGTMELRTTPKLKVMGQGRGNGDPGGGDGGKTEKDSQEW) is disordered. The segment covering 338–350 (QGRGNGDPGGGDG) has biased composition (gly residues). Over residues 351-360 (GKTEKDSQEW) the composition is skewed to basic and acidic residues.

It belongs to the G-protein coupled receptor 1 family.

It is found in the cell membrane. Functionally, low-affinity receptor for leukotrienes including leukotriene B4. Mediates chemotaxis of granulocytes and macrophages. The response is mediated via G-proteins that activate a phosphatidylinositol-calcium second messenger system. The chain is Leukotriene B4 receptor 2 (Ltb4r2) from Mus musculus (Mouse).